The sequence spans 188 residues: Probable chorismate pyruvate-lyase (188 aa).

The substrate site is built by Arg77, Leu115, and Glu174.

It belongs to the UbiC family.

Its subcellular location is the cytoplasm. It carries out the reaction chorismate = 4-hydroxybenzoate + pyruvate. It participates in cofactor biosynthesis; ubiquinone biosynthesis. Its function is as follows. Removes the pyruvyl group from chorismate, with concomitant aromatization of the ring, to provide 4-hydroxybenzoate (4HB) for the ubiquinone pathway. In Shewanella loihica (strain ATCC BAA-1088 / PV-4), this protein is Probable chorismate pyruvate-lyase.